We begin with the raw amino-acid sequence, 373 residues long: Erythronate-4-phosphate dehydrogenase (373 aa).

Substrate contacts are provided by Ser-45 and Thr-66. Positions 146 and 173 each coordinate NAD(+). Arg-206 is a catalytic residue. NAD(+) is bound at residue Asp-230. Glu-235 is a catalytic residue. His-252 serves as the catalytic Proton donor. Gly-255 is an NAD(+) binding site. Tyr-256 lines the substrate pocket.

Belongs to the D-isomer specific 2-hydroxyacid dehydrogenase family. PdxB subfamily. As to quaternary structure, homodimer.

It is found in the cytoplasm. The enzyme catalyses 4-phospho-D-erythronate + NAD(+) = (R)-3-hydroxy-2-oxo-4-phosphooxybutanoate + NADH + H(+). Its pathway is cofactor biosynthesis; pyridoxine 5'-phosphate biosynthesis; pyridoxine 5'-phosphate from D-erythrose 4-phosphate: step 2/5. In terms of biological role, catalyzes the oxidation of erythronate-4-phosphate to 3-hydroxy-2-oxo-4-phosphonooxybutanoate. The polypeptide is Erythronate-4-phosphate dehydrogenase (Saccharophagus degradans (strain 2-40 / ATCC 43961 / DSM 17024)).